The following is a 228-amino-acid chain: DNA repair protein RecO (228 aa).

It belongs to the RecO family.

Functionally, involved in DNA repair and RecF pathway recombination. The chain is DNA repair protein RecO from Mannheimia succiniciproducens (strain KCTC 0769BP / MBEL55E).